The primary structure comprises 644 residues: Probable potassium transport system protein Kup (644 aa).

Helical transmembrane passes span 10–30 (GGATLPLMAMAALGVVFGDIG), 56–76 (ILSLIFWTLVLVVSVKYAWVI), 106–126 (WWILSIGLLGAALFYGDGVIT), 143–163 (PAWKPLVIPLALGVIIGLFMV), 175–195 (FGPSMLVWFLLLFGSGLTWIV), 212–232 (FFGIHGIGGLVILGAVVLAVT), 252–272 (AWYFLVLPALALNYLGQGALL), 282–302 (PFFMLFPAWATIPMVVISGIA), 343–363 (IYLPLLNWLLMVAVIVVILWF), 371–391 (FAYGTAVTGTMLMTTILVFFV), 403–423 (AGLFCGFFVLLDGVFFGANLL), and 425–445 (FVEGGWFPLAIGLAVFTTMST).

Belongs to the HAK/KUP transporter (TC 2.A.72) family.

The protein resides in the cell inner membrane. The catalysed reaction is K(+)(in) + H(+)(in) = K(+)(out) + H(+)(out). Transport of potassium into the cell. Likely operates as a K(+):H(+) symporter. This chain is Probable potassium transport system protein Kup, found in Acidithiobacillus ferrooxidans (strain ATCC 23270 / DSM 14882 / CIP 104768 / NCIMB 8455) (Ferrobacillus ferrooxidans (strain ATCC 23270)).